The chain runs to 518 residues: GMP synthase [glutamine-hydrolyzing] (518 aa).

A Glutamine amidotransferase type-1 domain is found at threonine 8–asparagine 201. Cysteine 85 serves as the catalytic Nucleophile. Active-site residues include histidine 175 and glutamate 177. The 192-residue stretch at tryptophan 202 to arginine 393 folds into the GMPS ATP-PPase domain. Serine 229 to serine 235 is an ATP binding site.

Homodimer.

The enzyme catalyses XMP + L-glutamine + ATP + H2O = GMP + L-glutamate + AMP + diphosphate + 2 H(+). It participates in purine metabolism; GMP biosynthesis; GMP from XMP (L-Gln route): step 1/1. In terms of biological role, catalyzes the synthesis of GMP from XMP. This chain is GMP synthase [glutamine-hydrolyzing], found in Bartonella bacilliformis (strain ATCC 35685 / KC583 / Herrer 020/F12,63).